Consider the following 207-residue polypeptide: UPF0328 protein ECU02_1590/ECU04_0060/ECU08_2120 (207 aa).

Disordered stretches follow at residues 1 to 154 and 180 to 207; these read MPRP…HSHT and GRLHGSPTKGAQTAQQAQPHPPKQLATL. Basic and acidic residues-rich tracts occupy residues 14–24 and 75–97; these read DHPDFRSESSA and HTEGCHTHEANPEPNTKHTETES. 2 stretches are compositionally biased toward polar residues: residues 98-121 and 133-149; these read PKPQTSTQHHTPITIPSSLLSQNT and SRPSTIPANTYQPQSPH.

The protein belongs to the UPF0328 family.

The protein is UPF0328 protein ECU02_1590/ECU04_0060/ECU08_2120 of Encephalitozoon cuniculi (strain GB-M1) (Microsporidian parasite).